We begin with the raw amino-acid sequence, 218 residues long: Adenylate kinase (218 aa).

12-17 contributes to the ATP binding site; it reads GAGKGT. The segment at 32 to 61 is NMP; the sequence is STGDMLREARSSGTEMGKRVAEVMDRGELV. AMP-binding positions include threonine 33, arginine 38, 59–61, 85–88, and glutamine 92; these read ELV and GFPR. The interval 126 to 164 is LID; it reads GRFTCGNCGEVYHDVTKPTKEPGKCDVCGSTDLRRRADD. Arginine 127 contacts ATP. Zn(2+) contacts are provided by cysteine 130 and cysteine 133. ATP is bound at residue 136-137; sequence VY. Residues cysteine 150 and cysteine 153 each contribute to the Zn(2+) site. AMP-binding residues include arginine 161 and arginine 172. Alanine 200 serves as a coordination point for ATP.

The protein belongs to the adenylate kinase family. As to quaternary structure, monomer.

It is found in the cytoplasm. The enzyme catalyses AMP + ATP = 2 ADP. It functions in the pathway purine metabolism; AMP biosynthesis via salvage pathway; AMP from ADP: step 1/1. Functionally, catalyzes the reversible transfer of the terminal phosphate group between ATP and AMP. Plays an important role in cellular energy homeostasis and in adenine nucleotide metabolism. This is Adenylate kinase from Paracoccus denitrificans (strain Pd 1222).